A 559-amino-acid polypeptide reads, in one-letter code: Probable alpha-(1-&gt;6)-mannopyranosyltransferase MSMEG_3120/MSMEI_3041 (559 aa).

A run of 12 helical transmembrane segments spans residues 41-61, 81-101, 202-222, 247-267, 300-316, 321-340, 355-375, 386-406, 419-439, 455-475, 480-500, and 507-527; these read FGATGTVLMAIGALGAGARPV, VSLTMTTTGAVMMALAWLMLG, IVEAVMCHRLVVLIGVGLIVW, LLFMHLVAGIHNEALMLGLML, WQPMAMLVLGAVLIAMS, LPSLLALGFVAMALAWRWGG, ISLAVMAVIGWASGLGFGWLF, WMSPPTLIALGTGQVGILLGL, AIGVFMISILVSWLLFAVLRG, VLLFPVVQPWYLLWAIIPLAA, PGFRGATIAITLIVGIFGPTA, and LFQIVMATLASAVTVLLLIAL. The span at 535-548 shows a compositional bias: pro residues; sequence RPAPEPPARPPEQP. Residues 535–559 are disordered; the sequence is RPAPEPPARPPEQPAPADDAYAESP.

Belongs to the MptA/B family.

The protein localises to the membrane. Its function is as follows. Catalyzes the addition of alpha-(1-&gt;6)-mannose residue. This is Probable alpha-(1-&gt;6)-mannopyranosyltransferase MSMEG_3120/MSMEI_3041 from Mycolicibacterium smegmatis (strain ATCC 700084 / mc(2)155) (Mycobacterium smegmatis).